The primary structure comprises 375 residues: DNA replication and repair protein RecF (375 aa).

30–37 (GENAQGKT) contacts ATP.

Belongs to the RecF family.

It localises to the cytoplasm. Functionally, the RecF protein is involved in DNA metabolism; it is required for DNA replication and normal SOS inducibility. RecF binds preferentially to single-stranded, linear DNA. It also seems to bind ATP. The polypeptide is DNA replication and repair protein RecF (Latilactobacillus sakei subsp. sakei (strain 23K) (Lactobacillus sakei subsp. sakei)).